The chain runs to 475 residues: Trifunctional enzyme subunit beta, mitochondrial (475 aa).

The N-terminal 34 residues, 1 to 34 (MISLLTYTLKNLPNTSKWALRFCMRPLSSSSQLQ), are a transit peptide targeting the mitochondrion. N6-acetyllysine; alternate is present on K73. Residue K73 is modified to N6-succinyllysine; alternate. C139 acts as the Acyl-thioester intermediate in catalysis. An intramembrane segment occupies 174–221 (IRHSRKMRKMMLDLNKAKTLAQRLSIISKFRLNFLSPELPAVSEFSTS). Residue K189 is modified to N6-acetyllysine; alternate. Residue K189 is modified to N6-succinyllysine; alternate. K191 and K292 each carry N6-succinyllysine. N6-acetyllysine; alternate is present on K294. An N6-succinyllysine; alternate modification is found at K294. K299 is modified (N6-acetyllysine). K333 is modified (N6-acetyllysine; alternate). The residue at position 333 (K333) is an N6-succinyllysine; alternate. N6-acetyllysine is present on residues K349 and K362. C459 (proton donor/acceptor) is an active-site residue.

Belongs to the thiolase-like superfamily. Thiolase family. As to quaternary structure, heterotetramer of 2 alpha/HADHA and 2 beta/HADHB subunits; forms the mitochondrial trifunctional enzyme. Also purified as higher order heterooligomers including a 4 alpha/HADHA and 4 beta/HADHB heterooligomer which physiological significance remains unclear. The mitochondrial trifunctional enzyme interacts with MTLN. Interacts with RSAD2/viperin.

The protein localises to the mitochondrion. Its subcellular location is the mitochondrion inner membrane. The protein resides in the mitochondrion outer membrane. It localises to the endoplasmic reticulum. The catalysed reaction is an acyl-CoA + acetyl-CoA = a 3-oxoacyl-CoA + CoA. It catalyses the reaction butanoyl-CoA + acetyl-CoA = 3-oxohexanoyl-CoA + CoA. The enzyme catalyses hexanoyl-CoA + acetyl-CoA = 3-oxooctanoyl-CoA + CoA. It carries out the reaction octanoyl-CoA + acetyl-CoA = 3-oxodecanoyl-CoA + CoA. The catalysed reaction is decanoyl-CoA + acetyl-CoA = 3-oxododecanoyl-CoA + CoA. It catalyses the reaction dodecanoyl-CoA + acetyl-CoA = 3-oxotetradecanoyl-CoA + CoA. The enzyme catalyses tetradecanoyl-CoA + acetyl-CoA = 3-oxohexadecanoyl-CoA + CoA. It participates in lipid metabolism; fatty acid beta-oxidation. Its function is as follows. Mitochondrial trifunctional enzyme catalyzes the last three of the four reactions of the mitochondrial beta-oxidation pathway. The mitochondrial beta-oxidation pathway is the major energy-producing process in tissues and is performed through four consecutive reactions breaking down fatty acids into acetyl-CoA. Among the enzymes involved in this pathway, the trifunctional enzyme exhibits specificity for long-chain fatty acids. Mitochondrial trifunctional enzyme is a heterotetrameric complex composed of two proteins, the trifunctional enzyme subunit alpha/HADHA carries the 2,3-enoyl-CoA hydratase and the 3-hydroxyacyl-CoA dehydrogenase activities, while the trifunctional enzyme subunit beta/HADHB described here bears the 3-ketoacyl-CoA thiolase activity. The sequence is that of Trifunctional enzyme subunit beta, mitochondrial (HADHB) from Bos taurus (Bovine).